We begin with the raw amino-acid sequence, 159 residues long: MEKIASFTINHLELLPGVYVSRQDKFGDTVLTTFDIRMNRPNFEPTMNTAEMHAIEHLAATFLRNHKDYADKTVYFGPMGCRTGFYLILHGDYKSKDIVPLLTELYKFMAEFEGDIPGASAKDCGNYLDMNLPMAKYLANKFLNDILLNITEKNLVYPN.

Fe cation-binding residues include His53, His57, and Cys124.

The protein belongs to the LuxS family. As to quaternary structure, homodimer. Requires Fe cation as cofactor.

It catalyses the reaction S-(5-deoxy-D-ribos-5-yl)-L-homocysteine = (S)-4,5-dihydroxypentane-2,3-dione + L-homocysteine. In terms of biological role, involved in the synthesis of autoinducer 2 (AI-2) which is secreted by bacteria and is used to communicate both the cell density and the metabolic potential of the environment. The regulation of gene expression in response to changes in cell density is called quorum sensing. Catalyzes the transformation of S-ribosylhomocysteine (RHC) to homocysteine (HC) and 4,5-dihydroxy-2,3-pentadione (DPD). This Clostridium beijerinckii (strain ATCC 51743 / NCIMB 8052) (Clostridium acetobutylicum) protein is S-ribosylhomocysteine lyase.